We begin with the raw amino-acid sequence, 615 residues long: Medium-chain acyl-CoA ligase ACSF2, mitochondrial (615 aa).

The transit peptide at 1–41 directs the protein to the mitochondrion; sequence MAVYVGMLRLGRLCAGSSGVLGARVALSRSWQEARLQGVRF. Lysine 179 is subject to N6-acetyllysine. Lysine 182 is modified (N6-acetyllysine; alternate). An N6-succinyllysine; alternate modification is found at lysine 182. Position 263 to 271 (263 to 271) interacts with ATP; it reads TSGTTGSPK. 2 positions are modified to N6-acetyllysine: lysine 340 and lysine 398. Lysine 478 carries the post-translational modification N6-succinyllysine. Residues aspartate 493 and arginine 508 each contribute to the ATP site. At lysine 510 the chain carries N6-acetyllysine. N6-acetyllysine; alternate is present on residues lysine 544 and lysine 570. Residues lysine 544 and lysine 570 each carry the N6-succinyllysine; alternate modification. ATP is bound at residue lysine 599. Lysine 599 carries the post-translational modification N6-succinyllysine.

This sequence belongs to the ATP-dependent AMP-binding enzyme family.

The protein resides in the mitochondrion. It carries out the reaction a medium-chain fatty acid + ATP + CoA = a medium-chain fatty acyl-CoA + AMP + diphosphate. The catalysed reaction is octanoate + ATP + CoA = octanoyl-CoA + AMP + diphosphate. Acyl-CoA synthases catalyze the initial reaction in fatty acid metabolism, by forming a thioester with CoA. Has some preference toward medium-chain substrates. Plays a role in adipocyte differentiation. This is Medium-chain acyl-CoA ligase ACSF2, mitochondrial from Pongo abelii (Sumatran orangutan).